Here is a 219-residue protein sequence, read N- to C-terminus: Dynein light chain Tctex-type 4 (219 aa).

The interval 1–84 (MACRTLPSRR…RRPSLGPVPP (84 aa)) is disordered. Residues 9 to 20 (RRQEEETTKDLA) are compositionally biased toward basic and acidic residues. Ser64 bears the Phosphoserine mark.

The protein belongs to the dynein light chain Tctex-type family. In terms of assembly, interacts with ENG/endoglin, TGFBR2 and TGFBR3. Interacts with PPP1CC.

The protein resides in the cell projection. Its subcellular location is the cilium. The protein localises to the flagellum. It is found in the cytoplasmic vesicle. It localises to the secretory vesicle. The protein resides in the acrosome. Its subcellular location is the cytoplasm. The protein localises to the cytoskeleton. It is found in the cilium axoneme. It localises to the nucleus. The protein resides in the microtubule organizing center. The protein is Dynein light chain Tctex-type 4 (Dynlt4) of Mus musculus (Mouse).